We begin with the raw amino-acid sequence, 288 residues long: Energy-coupling factor transporter ATP-binding protein EcfA2 (288 aa).

The 244-residue stretch at 3-246 (IKLEQLGYCY…PDELVDLGLS (244 aa)) folds into the ABC transporter domain. 40 to 47 (GHTGSGKS) provides a ligand contact to ATP.

It belongs to the ABC transporter superfamily. Energy-coupling factor EcfA family. In terms of assembly, forms a stable energy-coupling factor (ECF) transporter complex composed of 2 membrane-embedded substrate-binding proteins (S component), 2 ATP-binding proteins (A component) and 2 transmembrane proteins (T component).

It localises to the cell membrane. Functionally, ATP-binding (A) component of a common energy-coupling factor (ECF) ABC-transporter complex. Unlike classic ABC transporters this ECF transporter provides the energy necessary to transport a number of different substrates. The polypeptide is Energy-coupling factor transporter ATP-binding protein EcfA2 (Listeria monocytogenes serovar 1/2a (strain ATCC BAA-679 / EGD-e)).